The chain runs to 744 residues: Endonuclease MutS2 (744 aa).

Gly-315–Thr-322 serves as a coordination point for ATP. One can recognise a Smr domain in the interval Val-668–Arg-743.

Belongs to the DNA mismatch repair MutS family. MutS2 subfamily. In terms of assembly, homodimer. Interacts with MutL. Binds to stalled ribosomes, contacting rRNA.

Nuclease activity is stimulated by interaction with MutL. ATPase activity is stimulated by dsDNA. Functionally, endonuclease that is involved in the suppression of homologous recombination and may thus have a key role in the control of bacterial genetic diversity. Cleaves the phosphate backbone of oligodeoxynucleotides non-sequence-specifically at the 3' side of the phosphates. Preferably incises the branched DNA structures, especially the D-loop structure over the Holliday junction. Has ATPase activity. Binds to dsDNA but not to ssDNA. In terms of biological role, acts as a ribosome collision sensor, splitting the ribosome into its 2 subunits. Detects stalled/collided 70S ribosomes which it binds and splits by an ATP-hydrolysis driven conformational change. Acts upstream of the ribosome quality control system (RQC), a ribosome-associated complex that mediates the extraction of incompletely synthesized nascent chains from stalled ribosomes and their subsequent degradation. Probably generates substrates for RQC. The protein is Endonuclease MutS2 of Thermus thermophilus (strain ATCC 27634 / DSM 579 / HB8).